The sequence spans 968 residues: RNA polymerase-associated protein RapA (968 aa).

Positions 164–334 constitute a Helicase ATP-binding domain; the sequence is DVGRRHAPRV…FARLRLLDPN (171 aa). An ATP-binding site is contributed by 177-184; it reads DEVGLGKT. Positions 280 to 283 match the DEAH box motif; it reads DEAH. The region spanning 490–662 is the Helicase C-terminal domain; that stretch reads RVEWLMGYLT…YLAAPENTEG (173 aa).

Belongs to the SNF2/RAD54 helicase family. RapA subfamily. In terms of assembly, interacts with the RNAP. Has a higher affinity for the core RNAP than for the holoenzyme. Its ATPase activity is stimulated by binding to RNAP.

In terms of biological role, transcription regulator that activates transcription by stimulating RNA polymerase (RNAP) recycling in case of stress conditions such as supercoiled DNA or high salt concentrations. Probably acts by releasing the RNAP, when it is trapped or immobilized on tightly supercoiled DNA. Does not activate transcription on linear DNA. Probably not involved in DNA repair. This Cronobacter sakazakii (strain ATCC BAA-894) (Enterobacter sakazakii) protein is RNA polymerase-associated protein RapA.